Here is a 240-residue protein sequence, read N- to C-terminus: uncharacterized protein (240 aa).

It localises to the mitochondrion. This is an uncharacterized protein from Arabidopsis thaliana (Mouse-ear cress).